A 156-amino-acid polypeptide reads, in one-letter code: ATP synthase subunit b (156 aa).

A helical transmembrane segment spans residues 5-27 (ITLIGQMITFAIFIGFTMKFVWP).

Belongs to the ATPase B chain family. As to quaternary structure, F-type ATPases have 2 components, F(1) - the catalytic core - and F(0) - the membrane proton channel. F(1) has five subunits: alpha(3), beta(3), gamma(1), delta(1), epsilon(1). F(0) has three main subunits: a(1), b(2) and c(10-14). The alpha and beta chains form an alternating ring which encloses part of the gamma chain. F(1) is attached to F(0) by a central stalk formed by the gamma and epsilon chains, while a peripheral stalk is formed by the delta and b chains.

The protein resides in the cell inner membrane. Its function is as follows. F(1)F(0) ATP synthase produces ATP from ADP in the presence of a proton or sodium gradient. F-type ATPases consist of two structural domains, F(1) containing the extramembraneous catalytic core and F(0) containing the membrane proton channel, linked together by a central stalk and a peripheral stalk. During catalysis, ATP synthesis in the catalytic domain of F(1) is coupled via a rotary mechanism of the central stalk subunits to proton translocation. Component of the F(0) channel, it forms part of the peripheral stalk, linking F(1) to F(0). The polypeptide is ATP synthase subunit b (Francisella tularensis subsp. holarctica (strain OSU18)).